Here is a 353-residue protein sequence, read N- to C-terminus: Quinolinate synthase (353 aa).

Positions 47 and 68 each coordinate iminosuccinate. Position 113 (C113) interacts with [4Fe-4S] cluster. Iminosuccinate-binding positions include 139-141 and S156; that span reads YAN. Residue C200 coordinates [4Fe-4S] cluster. Iminosuccinate contacts are provided by residues 226–228 and T243; that span reads HPE. Position 297 (C297) interacts with [4Fe-4S] cluster.

This sequence belongs to the quinolinate synthase family. Type 1 subfamily. [4Fe-4S] cluster serves as cofactor.

It localises to the cytoplasm. It carries out the reaction iminosuccinate + dihydroxyacetone phosphate = quinolinate + phosphate + 2 H2O + H(+). The protein operates within cofactor biosynthesis; NAD(+) biosynthesis; quinolinate from iminoaspartate: step 1/1. Functionally, catalyzes the condensation of iminoaspartate with dihydroxyacetone phosphate to form quinolinate. This Photobacterium profundum (strain SS9) protein is Quinolinate synthase.